Consider the following 291-residue polypeptide: N-acetylmannosamine kinase (291 aa).

ATP contacts are provided by residues 5–12 (AIDIGGTK) and 132–139 (GVGGGVVS). 4 residues coordinate Zn(2+): His156, Cys166, Cys168, and Cys173.

It belongs to the ROK (NagC/XylR) family. NanK subfamily. Homodimer.

The enzyme catalyses an N-acyl-D-mannosamine + ATP = an N-acyl-D-mannosamine 6-phosphate + ADP + H(+). It participates in amino-sugar metabolism; N-acetylneuraminate degradation; D-fructose 6-phosphate from N-acetylneuraminate: step 2/5. Functionally, catalyzes the phosphorylation of N-acetylmannosamine (ManNAc) to ManNAc-6-P. The sequence is that of N-acetylmannosamine kinase from Escherichia coli (strain SE11).